A 187-amino-acid chain; its full sequence is Peptidyl-tRNA hydrolase (187 aa).

Tyrosine 15 lines the tRNA pocket. The active-site Proton acceptor is the histidine 20. Residues phenylalanine 65, asparagine 67, and asparagine 113 each contribute to the tRNA site.

This sequence belongs to the PTH family. Monomer.

The protein localises to the cytoplasm. The enzyme catalyses an N-acyl-L-alpha-aminoacyl-tRNA + H2O = an N-acyl-L-amino acid + a tRNA + H(+). Hydrolyzes ribosome-free peptidyl-tRNAs (with 1 or more amino acids incorporated), which drop off the ribosome during protein synthesis, or as a result of ribosome stalling. Its function is as follows. Catalyzes the release of premature peptidyl moieties from peptidyl-tRNA molecules trapped in stalled 50S ribosomal subunits, and thus maintains levels of free tRNAs and 50S ribosomes. The chain is Peptidyl-tRNA hydrolase from Methylococcus capsulatus (strain ATCC 33009 / NCIMB 11132 / Bath).